The primary structure comprises 194 residues: Calcium channel flower (194 aa).

The Cytoplasmic portion of the chain corresponds to 1–34 (MSFAEKITGLLARPNQQDPIGPEQPWYLKYGSRL). Residues 35 to 55 (LGIVAAFFAILFGLWNVFSII) traverse the membrane as a helical segment. Topologically, residues 56-65 (TLSVSCLVAG) are extracellular. The helical transmembrane segment at 66–88 (ILQMVAGFVVMLLEAPCCFVCFG) threads the bilayer. Topologically, residues 89–106 (QVNEIAEKVESKPLYFRA) are cytoplasmic. A helical membrane pass occupies residues 107-127 (GLYIAMAIPPIILCFGLASLF). Residues 128 to 194 (GSGLIFGTGV…TGAVGTDSNV (67 aa)) are Extracellular-facing. 2 important for promoting apoptosis regions span residues 135 to 157 (TGVVYGMMALGKKASAEDMRAAA) and 135 to 192 (TGVV…GTDS).

This sequence belongs to the calcium channel flower family. Associates with the dally/ magu complex. As to quaternary structure, homomultimer. Associates with the dally/ magu complex. As to expression, detected in the imaginal wing disk (at protein level). Detected throughout the adult brain, including the optic lobe but, at much lower levels of expression than isoform Lose-A. In terms of tissue distribution, detected in the optic lobe (at protein level). Detected throughout the adult brain, including the optic lobe. Expressed in damaged and undamaged optic lobe neurons. As to expression, expressed in optic lobe neurons, with higher levels of expression in suboptimal neurons. Specifically expressed in injury-damaged optic lobe neurons.

The protein localises to the cell membrane. Its subcellular location is the cytoplasmic vesicle. It is found in the secretory vesicle. The protein resides in the synaptic vesicle membrane. It localises to the presynaptic cell membrane. The protein localises to the endosome. Its subcellular location is the synaptic vesicle. With respect to regulation, channel activity is inhibited by La(3+), which reduces Ca(2+) influx and thus inhibits it's function in promoting activity-dependent bulk endocytosis (ADBE) in response to high stimuli. Transmembrane protein which mediates synaptic endocytosis, fitness-based cell culling, neuronal culling, morphogen gradient scaling, and calcium transport. Regulates synaptic endocytosis and hence couples exo- with endocytosis. Controls two major modes of synaptic vesicle (SV) endocytosis in the synaptic boutons of neuromuscular junctions (NMJs); Ca(2+) channel-independent Clathrin-mediated endocytosis (CME) in response to mild stimulation, and Ca(2+) channel-dependent activity-dependent bulk endocytosis (ADBE) in response to strong stimulation. Functions in ADBE and subsequent SV reformation from bulk endosomes by initiating Ca(2+) channel-dependent phosphatidylinositol 4,5-bisphosphate (PtdIns(4,5)P2) compartmentalization in synaptic boutons. There it acts at the periactive zone to provide the low Ca(2+) levels required to initiate Calcineurin activation and upregulate PtdIns(4,5)P2. Conversely PtdIns(4,5)P2 enhances fwe Ca(2+) channel-activity, establishing a positive feedback loop that induces PtdIns(4,5)P2 microdomain at the periactive zone. These microdomains trigger bulk membrane invagination (i.e. ADBE) by triggering actin polymerization while also promoting localization of fwe to bulk endosomes, thereby removing the ADBE trigger to reduce endocytosis and prevent excess membrane uptake. PtdIns(4,5)P2 then promotes SV reformation from the bulk endosomes, to coordinate ADBE and subsequent SV reformation. Different combinations of the flower isoforms at the cell membrane are also required for the identification and elimination of suboptimal or supernumerary cells during development, regeneration, and adulthood. Required for the recognition and elimination of unfit cells in the developing wing during cell competition. Also required for efficient identification and elimination of injured, damaged and/or dysfunctional neurons during regeneration of the adult brain. In the developing pupal retina, mediates the elimination of unwanted postmitotic neurons, including supernumerary photoreceptor neurons that form at the periphery of the retina and are contained within incomplete ommatidia units. Downstream of the flower fitness fingerprints, cells identified as unwanted or unfit are eliminated via apoptosis through the expression of ahuizotl (azot). However, the cells marked for elimination by the flower isoforms only undergo apoptosis if additional thresholds are met; (1) their neighboring fit/healthy cells express different levels of the fwe isoforms, and (2) the levels of the protective signal SPARC expressed by the loser or unwanted cells are unable to inhibit caspase activation. These additional thresholds for flower-mediated apoptosis, allows useful cells to recover from transient and limited stress before they are unnecessarily eliminated. Functions with dally and magu in a mechanism of scaling, which utilises apoptosis to ensure that the dpp morphogen gradient, which mediates organ growth, remains proportional to the size of the growing wing. In this mechanism, fwe represses dally- and Magu-dependent activity in expanding the gradient, and dally/Magu inhibits fwe-dependent apoptosis to keep cell death rate low. When the levels of these different proteins are optimally regulated the gradient correctly scales with organ growth but when this fails, fwe-mediated apoptosis is activated to trim the developing tissue to match the correct size of the gradient. Functionally, functions with the other flower isoforms to produce tissue-specific fitness fingerprints that identify unfit or fit cells during cell selection processes in order to maintain tissue health. In the wing imaginal disk, this isoform is highly expressed in healthy/normal cells but is down-regulated in cells with decreased fitness. During cell competition, if levels of this isoform in unfit cells is lower than in the surrounding neighboring cells, the suboptimal cells are recognized as 'loser' cells, and undergo elimination via apoptosis to be replaced by the surrounding healthy 'winner' cell population. In terms of biological role, functions with the other flower isoforms to produce tissue-specific fitness fingerprints that identify unfit or fit cells during cell selection processes in order to maintain tissue health. In the wing imaginal disk, this isoform displays low levels of expression in healthy/normal cells but is up-regulated in cells with decreased fitness. During cell competition, if levels of this isoform in unfit cells is higher than in the surrounding neighboring cells, the suboptimal cells are recognized as 'loser' cells, and undergo elimination via apoptosis to be replaced by the surrounding healthy 'winner' cell population. Its function is as follows. Functions with the other flower isoforms to produce tissue-specific fitness fingerprints that identify unfit cells for cell selection processes during development, regeneration, and to maintain tissue health. During cell competition in certain tissues, marks suboptimal or damaged cells as 'loser' cells. In cells of the wing imaginal disk and damaged or dysfunctional neurons in the adult optic lobe, this isoform displays low to no expression in healthy/normal cells but is up-regulated in cells with decreased fitness or damage-affected neurons. During cell competition, if levels of this isoform in unfit cells is higher than in the surrounding neighboring cells, the suboptimal cells are recognized as 'loser' cells, and undergo elimination via apoptosis to be replaced by the surrounding healthy/undamaged 'winner' cell population. In the developing pupal retina, also required for the recognition and elimination of postmitotic neurons, including supernumerary photoreceptor neurons that form at the periphery of the retina and are contained within incomplete ommatidia units. Activity at the peripheral retina is induced by the wg signaling pathway but, once activated, it promotes apoptosis of supernumerary photoreceptor neurons independently of wg signaling and snail function. In Drosophila melanogaster (Fruit fly), this protein is Calcium channel flower (fwe).